The sequence spans 233 residues: Orotidine 5'-phosphate decarboxylase (233 aa).

Residues Asp9, Lys31, 58–67, Thr120, Arg182, Gln191, Gly211, and Arg212 contribute to the substrate site; that span reads DLKLHDIPNT. Lys60 (proton donor) is an active-site residue.

The protein belongs to the OMP decarboxylase family. Type 1 subfamily. In terms of assembly, homodimer.

The enzyme catalyses orotidine 5'-phosphate + H(+) = UMP + CO2. Its pathway is pyrimidine metabolism; UMP biosynthesis via de novo pathway; UMP from orotate: step 2/2. Functionally, catalyzes the decarboxylation of orotidine 5'-monophosphate (OMP) to uridine 5'-monophosphate (UMP). The chain is Orotidine 5'-phosphate decarboxylase from Listeria welshimeri serovar 6b (strain ATCC 35897 / DSM 20650 / CCUG 15529 / CIP 8149 / NCTC 11857 / SLCC 5334 / V8).